A 100-amino-acid polypeptide reads, in one-letter code: Urease subunit gamma (100 aa).

This sequence belongs to the urease gamma subunit family. As to quaternary structure, heterotrimer of UreA (gamma), UreB (beta) and UreC (alpha) subunits. Three heterotrimers associate to form the active enzyme.

It is found in the cytoplasm. It carries out the reaction urea + 2 H2O + H(+) = hydrogencarbonate + 2 NH4(+). It functions in the pathway nitrogen metabolism; urea degradation; CO(2) and NH(3) from urea (urease route): step 1/1. This Ruegeria sp. (strain TM1040) (Silicibacter sp.) protein is Urease subunit gamma.